A 296-amino-acid chain; its full sequence is Protoheme IX farnesyltransferase (296 aa).

8 helical membrane-spanning segments follow: residues 8 to 28 (VTKPGIIMGNLISVAGGFFLA), 35 to 55 (WILMLATVIGLSLVVASGCAI), 84 to 104 (AAFFHGIVLGVIGFALLSYFT), 107 to 127 (VAVAFAAFGYVVYVGLYTMYF), 132 to 152 (VYGTFVGSLSGAVPPVVGYCA), 162 to 182 (AILLTMFCIWQMPHSYAIAIF), 215 to 235 (FAVVAALLPLTGYVGIGFMVV), and 264 to 284 (VFFFSIITVTALSVTMALDFN).

Belongs to the UbiA prenyltransferase family. Protoheme IX farnesyltransferase subfamily.

The protein localises to the cell inner membrane. It carries out the reaction heme b + (2E,6E)-farnesyl diphosphate + H2O = Fe(II)-heme o + diphosphate. The protein operates within porphyrin-containing compound metabolism; heme O biosynthesis; heme O from protoheme: step 1/1. In terms of biological role, converts heme B (protoheme IX) to heme O by substitution of the vinyl group on carbon 2 of heme B porphyrin ring with a hydroxyethyl farnesyl side group. This chain is Protoheme IX farnesyltransferase, found in Marinomonas sp. (strain MWYL1).